A 458-amino-acid polypeptide reads, in one-letter code: MSWSILELIRNNPEVLKENLKRRFIDTSTVDKAVELDKKWRQTLQEVERLRHEHNLISSQIPKAPKEQKSELINKAKELLKTLEDKEKELQKIEEERENLLLSLPNLVHDSVPIGPDESYSVPIRFWGKFKVYKDDVNEFLKQTNGHKVDYEVINWKPVGHADMLENVLRLGDTKKAGEVAASRFYYLFNDIVWLDLALLLYAIDTITSRGYTLVLPPYMLRGEVIKSVIDLDTFKDAIYKIEGEDLYLIATAEHSIAALYYKEEIPKEELPLKLVGVSPAFRKEAGAANKDLKGIFRVHQFHKVEQFIFSSPEDSWKYHEEMIENAEEIFRGLGLPYRVINIASGDLGAPAAKKYDLEVWMPAQAKFREMVSCSNCLDWQAYRMRIRYVEKNNKKGYLHTLNSTAIASTRAITAILENFQKEDGVVEVPKVLRKYLETFSGAPKEYIYPKKKPNTTS.

Residue 252–254 participates in L-serine binding; the sequence is TAE. Residues 283-285 and V299 each bind ATP; that span reads RKE. E306 is a binding site for L-serine. Residue 370–373 coordinates ATP; the sequence is EMVS. T405 is an L-serine binding site.

Belongs to the class-II aminoacyl-tRNA synthetase family. Type-1 seryl-tRNA synthetase subfamily. Homodimer. The tRNA molecule binds across the dimer.

It is found in the cytoplasm. The catalysed reaction is tRNA(Ser) + L-serine + ATP = L-seryl-tRNA(Ser) + AMP + diphosphate + H(+). It catalyses the reaction tRNA(Sec) + L-serine + ATP = L-seryl-tRNA(Sec) + AMP + diphosphate + H(+). It participates in aminoacyl-tRNA biosynthesis; selenocysteinyl-tRNA(Sec) biosynthesis; L-seryl-tRNA(Sec) from L-serine and tRNA(Sec): step 1/1. In terms of biological role, catalyzes the attachment of serine to tRNA(Ser). Is also able to aminoacylate tRNA(Sec) with serine, to form the misacylated tRNA L-seryl-tRNA(Sec), which will be further converted into selenocysteinyl-tRNA(Sec). In Sulfolobus acidocaldarius (strain ATCC 33909 / DSM 639 / JCM 8929 / NBRC 15157 / NCIMB 11770), this protein is Serine--tRNA ligase.